The primary structure comprises 430 residues: Adenylosuccinate synthetase (430 aa).

Residues 13–19 (GDEGKGK) and 41–43 (GHT) each bind GTP. Catalysis depends on Asp14, which acts as the Proton acceptor. Residues Asp14 and Gly41 each coordinate Mg(2+). IMP is bound by residues 14–17 (DEGK), 39–42 (NAGH), Thr130, Arg144, Gln225, Thr240, and Arg304. The Proton donor role is filled by His42. A substrate-binding site is contributed by 300 to 306 (STTGRAR). Residues Arg306, 332-334 (KLD), and 414-416 (STG) each bind GTP.

It belongs to the adenylosuccinate synthetase family. Homodimer. The cofactor is Mg(2+).

It localises to the cytoplasm. It carries out the reaction IMP + L-aspartate + GTP = N(6)-(1,2-dicarboxyethyl)-AMP + GDP + phosphate + 2 H(+). It participates in purine metabolism; AMP biosynthesis via de novo pathway; AMP from IMP: step 1/2. Its function is as follows. Plays an important role in the de novo pathway of purine nucleotide biosynthesis. Catalyzes the first committed step in the biosynthesis of AMP from IMP. The protein is Adenylosuccinate synthetase of Thioalkalivibrio sulfidiphilus (strain HL-EbGR7).